The following is a 1080-amino-acid chain: Protein transport protein SEC24 C (1080 aa).

Positions 1–10 (MVAPVPPGAP) are enriched in pro residues. Disordered regions lie at residues 1–189 (MVAP…SGMI), 201–220 (GSGGFPRGTQFPGAAVTTPQ), and 316–367 (TAMG…SDYV). Residues 12–43 (PNSQQNSGPPNFYPGSQGNSNALADNMQNLSL) are compositionally biased toward polar residues. The segment covering 45-70 (RPPPMMPGSGPRPPPPFGQSPQPFPQ) has biased composition (pro residues). Low complexity-rich tracts occupy residues 71-84 (QSPSYGAPQRGPSP), 142-160 (PAASSSGFPAFGPSGSVAA), and 178-189 (GSGMSMPPSGMI). Residues 340–356 (GSSSSPTVFETRQSNQA) show a composition bias toward polar residues. C430, C433, C452, and C455 together coordinate Zn(2+). The zinc finger-like stretch occupies residues 430–455 (CSRCKGYINPFMKFIDQGRKFICNFC).

This sequence belongs to the SEC23/SEC24 family. SEC24 subfamily. In terms of assembly, component of the coat protein complex II (COPII), composed of at least five proteins: the Sec23/24 complex, the Sec13/31 complex and Sar1. As to expression, mainly expressed at low levels in pollen, leaves, roots and stems.

It localises to the cytoplasmic vesicle. The protein localises to the COPII-coated vesicle membrane. Its subcellular location is the endoplasmic reticulum membrane. The protein resides in the golgi apparatus membrane. Component of the coat protein complex II (COPII), that covers ER-derived vesicles involved in transport from the endoplasmic reticulum to the Golgi apparatus. COPII is composed of at least five proteins: the SEC23/24 complex, the SEC13/31 complex, and the protein SAR1. Acts in the cytoplasm to promote the transport of secretory, plasma membrane, and vacuolar proteins from the endoplasmic reticulum to the Golgi complex. The chain is Protein transport protein SEC24 C from Arabidopsis thaliana (Mouse-ear cress).